Reading from the N-terminus, the 280-residue chain is Energy-coupling factor transporter ATP-binding protein EcfA1 (280 aa).

One can recognise an ABC transporter domain in the interval 6–241 (LRTENISFQY…SHMLQEIGLD (236 aa)). Position 40-47 (40-47 (GQNGSGKS)) interacts with ATP.

Belongs to the ABC transporter superfamily. Energy-coupling factor EcfA family. As to quaternary structure, forms a stable energy-coupling factor (ECF) transporter complex composed of 2 membrane-embedded substrate-binding proteins (S component), 2 ATP-binding proteins (A component) and 2 transmembrane proteins (T component).

The protein resides in the cell membrane. ATP-binding (A) component of a common energy-coupling factor (ECF) ABC-transporter complex. Unlike classic ABC transporters this ECF transporter provides the energy necessary to transport a number of different substrates. This is Energy-coupling factor transporter ATP-binding protein EcfA1 from Bacillus cereus (strain ATCC 10987 / NRS 248).